Here is a 453-residue protein sequence, read N- to C-terminus: Chromosomal replication initiator protein DnaA (453 aa).

Positions 1-74 (MKEKQFWNRI…GFEIYDAEIT (74 aa)) are domain I, interacts with DnaA modulators. Positions 74–113 (TPHYIFTKPQDTTSSQVEEATNLTLYDYSPKLVSIPYSDT) are domain II. The tract at residues 114 to 331 (GLKEKYTFDN…GAINDITLIA (218 aa)) is domain III, AAA+ region. ATP contacts are provided by Gly158, Gly160, Lys161, and Thr162. Positions 332–453 (RVKKIKDITI…EIESIKKKIK (122 aa)) are domain IV, binds dsDNA.

The protein belongs to the DnaA family. Oligomerizes as a right-handed, spiral filament on DNA at oriC. Interacts (via domains I and III) with CcrZ.

It localises to the cytoplasm. With respect to regulation, ccrZ stimulates DnaA, possibly by phosphorylation of an intermediate molecule, to initiate DNA replication. Its function is as follows. Plays an essential role in the initiation and regulation of chromosomal replication. ATP-DnaA binds to the origin of replication (oriC) to initiate formation of the DNA replication initiation complex once per cell cycle. Binds the DnaA box (a 9 base pair repeat at the origin) and separates the double-stranded (ds)DNA. Forms a right-handed helical filament on oriC DNA; dsDNA binds to the exterior of the filament while single-stranded (ss)DNA is stabiized in the filament's interior. The ATP-DnaA-oriC complex binds and stabilizes one strand of the AT-rich DNA unwinding element (DUE), permitting loading of DNA polymerase. After initiation quickly degrades to an ADP-DnaA complex that is not apt for DNA replication. Binds acidic phospholipids. Mutations in this gene suppress a deletion of cell cycle regulator ccrZ. The chain is Chromosomal replication initiator protein DnaA from Streptococcus pneumoniae serotype 2 (strain D39 / NCTC 7466).